A 570-amino-acid chain; its full sequence is BRICHOS domain-containing protein C09F5.1 (570 aa).

Over 1-288 the chain is Cytoplasmic; sequence MVVEQIEVIE…YTPELLRSLC (288 aa). Polar residues-rich tracts occupy residues 93 to 107 and 228 to 246; these read SGAT…SGDS and TSTL…SLVS. 2 disordered regions span residues 93 to 116 and 218 to 248; these read SGAT…GADR and SSWD…VSRE. The chain crosses the membrane as a helical span at residues 289-309; it reads CILLLLLLLLFLMFIIFNAIF. Over 310 to 570 the chain is Extracellular; that stretch reads NRYAVSEFLL…RKSINNATLV (261 aa). The region spanning 369-461 is the BRICHOS domain; it reads TAVDFNTGYV…IDDCEGAQWY (93 aa). Cys395 and Cys455 form a disulfide bridge.

It is found in the membrane. This is BRICHOS domain-containing protein C09F5.1 from Caenorhabditis elegans.